Consider the following 386-residue polypeptide: Latent membrane protein 1 (386 aa).

Topologically, residues 2–23 (DLDLERGPPGPRRPPRGPPLSS) are cytoplasmic. A helical transmembrane segment spans residues 24–44 (SIGLALLLLLLALLFWLYIIM). The Extracellular segment spans residues 45–51 (SNWTGGA). Residues 52–72 (LLVLYAFALMLVIIILIIFIF) form a helical membrane-spanning segment. Residues 73–75 (RRD) are Cytoplasmic-facing. Residues 76–96 (LLCPLGALCLLLLMITLLLIA) traverse the membrane as a helical segment. The Extracellular portion of the chain corresponds to 97-106 (LWNLHGQALY). The chain crosses the membrane as a helical span at residues 107–127 (LGIVLFIFGCLLVLGLWIYLL). Residues 128–139 (EILWRLGATIWQ) are Cytoplasmic-facing. A helical transmembrane segment spans residues 140–160 (LLAFFLAFFLDIILLIIALYL). The Extracellular segment spans residues 161 to 163 (QQN). A helical transmembrane segment spans residues 164 to 184 (WWTLLVDLLWLLLFLAILIWM). Residues 185 to 386 (YYHGQRHSDE…HGPVQLSYYD (202 aa)) are Cytoplasmic-facing. The CTAR1 stretch occupies residues 194-232 (EHHHDDSLPHPQQATDDSSNQSDSNSNEGRHLLLVSGAG). The tract at residues 194-386 (EHHHDDSLPH…HGPVQLSYYD (193 aa)) is disordered. Composition is skewed to low complexity over residues 209 to 220 (DDSSNQSDSNSN) and 251 to 267 (NGPQDPDNTDDNGPQDP). A CTAR2 region spans residues 342-386 (GGGGHSHDSGHDGIDPHLPTLLLGTSGSGGDDDDPHGPVQLSYYD). Residues 346-356 (HSHDSGHDGID) show a composition bias toward basic and acidic residues. Residues 357 to 366 (PHLPTLLLGT) are compositionally biased toward low complexity.

The protein belongs to the herpesviridae LMP-1 family. In terms of assembly, interacts (via PXQXT motif) with host tumor necrosis factor receptor-associated factor (TRAF) proteins TRAF1, TRAF2, TRAF3 and TRAF5. Interacts with TRAF3; this interaction activates B lymphocytes. Interacts with human protein ZMYND11; leading to negatively regulate NF-kappa-B activation. Interacts with host UBE2I; this interaction induces the sumoylation of various cellular proteins. Interacts with host IRF7. Interacts with host TYK2. In terms of processing, ubiquitinated on the N-terminus.

Its subcellular location is the host cell membrane. Acts as a CD40 functional homolog to prevent apoptosis of infected B-lymphocytes and drive their proliferation. Functions as a constitutively active tumor necrosis factor receptor that induces the activation of several signaling pathways, including those of the NF-kappa-B family. LMP1 signaling leads to up-regulation of antiapoptotic proteins and provide growth signals in latently infected cells. Interacts with host UBE2I and subsequently affects the sumoylation state of several cellular proteins. For example, induces the sumoylation of host IRF7 thereby limiting its transcriptional activity and modulating the activation of innate immune responses. Also inhibits host IFN-alpha-stimulated STAT2 nuclear translocation and interferon-stimulated response element transcriptional activity by interacting with and inhibiting host TYK2. Induces SUMO expression during viral latency thereby dysregulating the host sumoylation processes. In Homo sapiens (Human), this protein is Latent membrane protein 1 (LMP1).